The sequence spans 315 residues: Zinc finger CCCH domain-containing protein 23 (315 aa).

A disordered region spans residues 1-21; sequence MMIGENKNRPHPTIHIPQWDQ. 2 C3H1-type zinc fingers span residues 131–157 and 165–189; these read YSGTACPEFRKGSCRRGDSCEFSHGVF and RYRTQPCKDGTSCRRRICFFAHTTE.

This Arabidopsis thaliana (Mouse-ear cress) protein is Zinc finger CCCH domain-containing protein 23.